The primary structure comprises 912 residues: Translation initiation factor IF-2 (912 aa).

Residues 185–204 form a disordered region; sequence NATRPKRKTKEEKQKEREER. Residues 193 to 204 show a composition bias toward basic and acidic residues; it reads TKEEKQKEREER. The tr-type G domain maps to 411-581; sequence LRPPIVTIMG…LLEAELLDLK (171 aa). Residues 420–427 form a G1 region; that stretch reads GHVDHGKT. 420-427 is a binding site for GTP; the sequence is GHVDHGKT. The interval 445-449 is G2; it reads GITQH. The tract at residues 467 to 470 is G3; the sequence is DTPG. GTP-binding positions include 467–471 and 521–524; these read DTPGH and NKID. A G4 region spans residues 521-524; the sequence is NKID. Positions 557–559 are G5; that stretch reads SAK.

This sequence belongs to the TRAFAC class translation factor GTPase superfamily. Classic translation factor GTPase family. IF-2 subfamily.

It localises to the cytoplasm. Functionally, one of the essential components for the initiation of protein synthesis. Protects formylmethionyl-tRNA from spontaneous hydrolysis and promotes its binding to the 30S ribosomal subunits. Also involved in the hydrolysis of GTP during the formation of the 70S ribosomal complex. The protein is Translation initiation factor IF-2 of Azobacteroides pseudotrichonymphae genomovar. CFP2.